We begin with the raw amino-acid sequence, 132 residues long: Large ribosomal subunit protein bL17 (132 aa).

It belongs to the bacterial ribosomal protein bL17 family. Part of the 50S ribosomal subunit. Contacts protein L32.

This chain is Large ribosomal subunit protein bL17, found in Ralstonia pickettii (strain 12J).